Consider the following 40-residue polypeptide: Photosystem II reaction center protein J (40 aa).

The helical transmembrane segment at isoleucine 8–phenylalanine 28 threads the bilayer.

The protein belongs to the PsbJ family. As to quaternary structure, PSII is composed of 1 copy each of membrane proteins PsbA, PsbB, PsbC, PsbD, PsbE, PsbF, PsbH, PsbI, PsbJ, PsbK, PsbL, PsbM, PsbT, PsbX, PsbY, PsbZ, Psb30/Ycf12, at least 3 peripheral proteins of the oxygen-evolving complex and a large number of cofactors. It forms dimeric complexes.

The protein resides in the plastid. The protein localises to the chloroplast thylakoid membrane. Functionally, one of the components of the core complex of photosystem II (PSII). PSII is a light-driven water:plastoquinone oxidoreductase that uses light energy to abstract electrons from H(2)O, generating O(2) and a proton gradient subsequently used for ATP formation. It consists of a core antenna complex that captures photons, and an electron transfer chain that converts photonic excitation into a charge separation. The polypeptide is Photosystem II reaction center protein J (Triticum aestivum (Wheat)).